The chain runs to 124 residues: Small ribosomal subunit protein uS12cz/uS12cy (124 aa).

The protein belongs to the universal ribosomal protein uS12 family. In terms of assembly, part of the 30S ribosomal subunit.

The protein resides in the plastid. In terms of biological role, with S4 and S5 plays an important role in translational accuracy. Located at the interface of the 30S and 50S subunits. This is Small ribosomal subunit protein uS12cz/uS12cy (rps12-A) from Epifagus virginiana (Beechdrops).